Reading from the N-terminus, the 177-residue chain is Acireductone dioxygenase (177 aa).

Positions 97, 99, 103, and 141 each coordinate Fe(2+). Ni(2+) contacts are provided by His-97, His-99, Glu-103, and His-141.

Belongs to the acireductone dioxygenase (ARD) family. As to quaternary structure, monomer. Requires Fe(2+) as cofactor. It depends on Ni(2+) as a cofactor.

It carries out the reaction 1,2-dihydroxy-5-(methylsulfanyl)pent-1-en-3-one + O2 = 3-(methylsulfanyl)propanoate + CO + formate + 2 H(+). The enzyme catalyses 1,2-dihydroxy-5-(methylsulfanyl)pent-1-en-3-one + O2 = 4-methylsulfanyl-2-oxobutanoate + formate + 2 H(+). It participates in amino-acid biosynthesis; L-methionine biosynthesis via salvage pathway; L-methionine from S-methyl-5-thio-alpha-D-ribose 1-phosphate: step 5/6. Functionally, catalyzes 2 different reactions between oxygen and the acireductone 1,2-dihydroxy-3-keto-5-methylthiopentene (DHK-MTPene) depending upon the metal bound in the active site. Fe-containing acireductone dioxygenase (Fe-ARD) produces formate and 2-keto-4-methylthiobutyrate (KMTB), the alpha-ketoacid precursor of methionine in the methionine recycle pathway. Ni-containing acireductone dioxygenase (Ni-ARD) produces methylthiopropionate, carbon monoxide and formate, and does not lie on the methionine recycle pathway. The protein is Acireductone dioxygenase of Leptospira biflexa serovar Patoc (strain Patoc 1 / ATCC 23582 / Paris).